The sequence spans 85 residues: UPF0335 protein Atu3758 (85 aa).

Belongs to the UPF0335 family.

The chain is UPF0335 protein Atu3758 from Agrobacterium fabrum (strain C58 / ATCC 33970) (Agrobacterium tumefaciens (strain C58)).